The following is a 416-amino-acid chain: Serine hydroxymethyltransferase (416 aa).

Residues L119 and G123–L125 contribute to the (6S)-5,6,7,8-tetrahydrofolate site. N6-(pyridoxal phosphate)lysine is present on K228. A (6S)-5,6,7,8-tetrahydrofolate-binding site is contributed by E243.

The protein belongs to the SHMT family. As to quaternary structure, homodimer. Requires pyridoxal 5'-phosphate as cofactor.

The protein localises to the cytoplasm. The enzyme catalyses (6R)-5,10-methylene-5,6,7,8-tetrahydrofolate + glycine + H2O = (6S)-5,6,7,8-tetrahydrofolate + L-serine. The protein operates within one-carbon metabolism; tetrahydrofolate interconversion. Its pathway is amino-acid biosynthesis; glycine biosynthesis; glycine from L-serine: step 1/1. Functionally, catalyzes the reversible interconversion of serine and glycine with tetrahydrofolate (THF) serving as the one-carbon carrier. This reaction serves as the major source of one-carbon groups required for the biosynthesis of purines, thymidylate, methionine, and other important biomolecules. Also exhibits THF-independent aldolase activity toward beta-hydroxyamino acids, producing glycine and aldehydes, via a retro-aldol mechanism. This Desulforapulum autotrophicum (strain ATCC 43914 / DSM 3382 / VKM B-1955 / HRM2) (Desulfobacterium autotrophicum) protein is Serine hydroxymethyltransferase.